The sequence spans 154 residues: MKQVDIFTDGSCLGNPGPGGWAAVLRYAGTQKELGGGFSGTTNNRMEILAVIEGLEALQEPCTVNLYTDSQYVRNAVEKKWLDSWQRNGWKTAARKPVKNKDLWLRLLPLLARHTVKFHWVRGHSGHPENELCDTIARGHASRGGLPPDTQAAG.

Residues 1–142 (MKQVDIFTDG…CDTIARGHAS (142 aa)) enclose the RNase H type-1 domain. Positions 9, 47, 69, and 134 each coordinate Mg(2+).

Belongs to the RNase H family. Monomer. Mg(2+) is required as a cofactor.

Its subcellular location is the cytoplasm. It catalyses the reaction Endonucleolytic cleavage to 5'-phosphomonoester.. In terms of biological role, endonuclease that specifically degrades the RNA of RNA-DNA hybrids. In Oleidesulfovibrio alaskensis (strain ATCC BAA-1058 / DSM 17464 / G20) (Desulfovibrio alaskensis), this protein is Ribonuclease H.